The following is a 446-amino-acid chain: MEWRRAFSKKKLEEKVKNMDAKQATDYLLEKVDEQRNLENKLDKRLQNTRKKNKNKEKTRTWAEKYPPVDYYSPEFVENFMKDMRREEFEKSEERRGHKQVRLGSDNFVGDDPLKVLSEEALKAGFQHTGKVMKRFPADVFEKSKFIGMYDRHLTTLREKACCKKERNQIQSKLIQLRQLKPSCDFLAGTVSGVPGSGKSTLLKNVQKKLKNSVCLLANKELKGDFAGVPSVFSVEEMLLSAVPSSFNVMLVDEYTLTQSAEILLLQRKLGAKIVVLFGDREQGNTNKLTSPEWLHVPIVFSSDSSHRFGPETAKFCEDQGFSLEGRGGEDKIVKGDYEGEGEDTEVNLCFTEETKADLAEVQVEAFLVSSVQGRTFSSVSLFVRENDKPVFSDPHLRLVAITRHRKLLSIRADPEVWVSFMFATREGEEVDTHCYGEEHRPDEAE.

Positions 40–60 are disordered; the sequence is NKLDKRLQNTRKKNKNKEKTR. In terms of domain architecture, (+)RNA virus helicase ATP-binding spans 160–303; it reads KACCKKERNQ…WLHVPIVFSS (144 aa). 193-200 is an ATP binding site; the sequence is GVPGSGKS. The 141-residue stretch at 304 to 444 folds into the (+)RNA virus helicase C-terminal domain; the sequence is DSSHRFGPET…CYGEEHRPDE (141 aa).

Belongs to the virgaviridae/benyvirus TGB1 movement protein family. As to quaternary structure, homooligomer. Interacts with movement protein TGB3. TGB1-TGB3-TGB2 complex formation is enhanced by ATP hydrolysis. Interacts with the suppressor of RNA silencing (via N-terminus). Mg(2+) is required as a cofactor.

It localises to the host cell junction. Its subcellular location is the host plasmodesma. It is found in the host nucleus. The protein localises to the host cytoplasm. The protein resides in the host nucleolus. It localises to the host cytoskeleton. It carries out the reaction ATP + H2O = ADP + phosphate + H(+). Participates in the transport of viral genome to neighboring plant cells directly through plasmodesmata, without any budding. Multifunctional movement protein with RNA-binding, ATPase and helicase activities. Engages in homologous interactions leading to the formation of a ribonucleoprotein complex containing plus-sense viral RNAs (vRNPs). ATPase activity is probably required for vRNPs movement complex assembly. Intracellular delivery of TGBp1-containing vRNPs to plasmodesmata is facilitated by TGBp2 and TGBp3. This is Movement protein TGB1 from Arachis hypogaea (Peanut).